A 283-amino-acid chain; its full sequence is E3 ubiquitin-protein ligase SGR9, amyloplastic (283 aa).

The N-terminal 32 residues, 1–32 (MEDENTTIIMASLSALSPSHLTNLTHSILSIS), are a transit peptide targeting the amyloplast. The RING-type; atypical zinc finger occupies 214–255 (CVICKEEMSEGRDVCEMPCQHFFHWKCILPWLSKKNTCPFCR).

Post-translationally, auto-ubiquitinated as part of the enzymatic reaction. In terms of tissue distribution, expressed in seedlings, hypocotyls, roots and stems. Present especially in hypocotyl and inflorescence endodermis, as well as in root cap columella, tissues that act as statocytes.

Its subcellular location is the plastid. The protein localises to the amyloplast. The catalysed reaction is S-ubiquitinyl-[E2 ubiquitin-conjugating enzyme]-L-cysteine + [acceptor protein]-L-lysine = [E2 ubiquitin-conjugating enzyme]-L-cysteine + N(6)-ubiquitinyl-[acceptor protein]-L-lysine.. Its pathway is protein modification; protein ubiquitination. Functionally, E3 ubiquitin-protein ligase which accepts ubiquitin from an E2 ubiquitin-conjugating enzyme in the form of a thioester and then directly transfers the ubiquitin to targeted substrates. Modulates amyloplast dynamics and sedimentation in statocytes during inflorescence, hypocotyl and root gravitropism, probably by regulating amyloplast interaction with actin filaments (AFs) in endodermal cells. The protein is E3 ubiquitin-protein ligase SGR9, amyloplastic (SGR9) of Arabidopsis thaliana (Mouse-ear cress).